Reading from the N-terminus, the 94-residue chain is Antifungal protein (94 aa).

The first 21 residues, 1–21, serve as a signal peptide directing secretion; that stretch reads MKFVSLASLGFALVAALGAVA. Residues 22-43 constitute a propeptide that is removed on maturation; sequence TPVEADSLTAGGLDARDESAVL. Intrachain disulfides connect cysteine 50–cysteine 76, cysteine 57–cysteine 83, cysteine 69–cysteine 71, and cysteine 92–cysteine 94.

This sequence belongs to the antifungal protein pafB family.

The protein resides in the secreted. It is found in the host cytoplasm. Its function is as follows. Antifungal protein that acts as an inhibitor of growth of a variety of fungal species. In Aspergillus giganteus, this protein is Antifungal protein (afp).